A 1107-amino-acid chain; its full sequence is Polyphosphatidylinositol phosphatase INP53 (1107 aa).

In terms of domain architecture, SAC spans 142–482; the sequence is LKKLLSNGSF…GDQISQIYTG (341 aa). Phosphoserine is present on serine 497. The interval 926 to 1107 is disordered; it reads TASSVASSSP…LDSWQPLTPK (182 aa). Residues 927 to 942 show a composition bias toward low complexity; the sequence is ASSVASSSPVSSASAS. The span at 943-956 shows a compositional bias: polar residues; sequence LQPVRTQNSSQSRT. Serine 986 is subject to Phosphoserine. Polar residues-rich tracts occupy residues 987-1005, 1020-1038, 1045-1063, and 1097-1107; these read PTPQ…NIQE, FSQN…SPMS, NSAS…QTPT, and TLDSWQPLTPK. Serine 1035 is subject to Phosphoserine. Threonine 1105 carries the phosphothreonine modification.

The protein belongs to the synaptojanin family. In the central section; belongs to the inositol 1,4,5-trisphosphate 5-phosphatase family. As to quaternary structure, interacts (via SAC domain) with BSP1; the interaction is direct. Interacts with CHC1.

The protein localises to the cytoplasm. The catalysed reaction is a 1,2-diacyl-sn-glycero-3-phospho-(1D-myo-inositol-4,5-bisphosphate) + H2O = a 1,2-diacyl-sn-glycero-3-phospho-(1D-myo-inositol 4-phosphate) + phosphate. Its function is as follows. Dephosphorylates a number of phosphatidylinositols (PIs) like phosphatidylinositol 4,5-bisphosphate (PtdIns(4,5)P2), but also phosphatidylinositol 3-phosphate (PtdIns(3)P), phosphatidylinositol 4-phosphate (PtdIns(4)P), and phosphatidylinositol 3,5-bisphosphate (PtdIns(3,5)P2). Controls the cellular levels and subcellular distribution of phosphatidylinositol 3-phosphate and phosphatidylinositol 4,5-bisphosphate. Plays an essential role in a TGN (trans Golgi network)-to-early endosome pathway. Involved in clathrin-mediated protein sorting at the TGN. The protein is Polyphosphatidylinositol phosphatase INP53 (INP53) of Saccharomyces cerevisiae (strain ATCC 204508 / S288c) (Baker's yeast).